A 189-amino-acid polypeptide reads, in one-letter code: Large ribosomal subunit protein bL9 (189 aa).

The protein belongs to the bacterial ribosomal protein bL9 family.

In terms of biological role, binds to the 23S rRNA. The polypeptide is Large ribosomal subunit protein bL9 (Cereibacter sphaeroides (strain ATCC 17023 / DSM 158 / JCM 6121 / CCUG 31486 / LMG 2827 / NBRC 12203 / NCIMB 8253 / ATH 2.4.1.) (Rhodobacter sphaeroides)).